A 142-amino-acid polypeptide reads, in one-letter code: Large ribosomal subunit protein uL13 (142 aa).

This sequence belongs to the universal ribosomal protein uL13 family. In terms of assembly, part of the 50S ribosomal subunit.

Functionally, this protein is one of the early assembly proteins of the 50S ribosomal subunit, although it is not seen to bind rRNA by itself. It is important during the early stages of 50S assembly. In Psychromonas ingrahamii (strain DSM 17664 / CCUG 51855 / 37), this protein is Large ribosomal subunit protein uL13.